A 629-amino-acid polypeptide reads, in one-letter code: tRNA uridine 5-carboxymethylaminomethyl modification enzyme MnmG (629 aa).

FAD is bound by residues 14-19 (GAGHAG), Val126, and Ser181. 273 to 287 (GPRYCPSIEDKVVRF) is a binding site for NAD(+). Gln370 contacts FAD.

Belongs to the MnmG family. In terms of assembly, homodimer. Heterotetramer of two MnmE and two MnmG subunits. Requires FAD as cofactor.

It is found in the cytoplasm. In terms of biological role, NAD-binding protein involved in the addition of a carboxymethylaminomethyl (cmnm) group at the wobble position (U34) of certain tRNAs, forming tRNA-cmnm(5)s(2)U34. The polypeptide is tRNA uridine 5-carboxymethylaminomethyl modification enzyme MnmG (Geobacillus kaustophilus (strain HTA426)).